A 152-amino-acid polypeptide reads, in one-letter code: Acidic phospholipase A2 1 (152 aa).

The first 19 residues, 1–19 (MNPAYFLVLAAVCVSLLGA), serve as a signal peptide directing secretion. Residues 20 to 27 (ANIPPQPL) constitute a propeptide that is removed on maturation. 7 disulfides stabilise this stretch: Cys-38–Cys-104, Cys-54–Cys-151, Cys-56–Cys-72, Cys-71–Cys-132, Cys-78–Cys-125, Cys-88–Cys-118, and Cys-111–Cys-123. Residues Tyr-55, Gly-57, and Gly-59 each coordinate Ca(2+). His-75 is a catalytic residue. Position 76 (Asp-76) interacts with Ca(2+). Asp-126 is a catalytic residue.

Belongs to the phospholipase A2 family. Group I subfamily. D49 sub-subfamily. Ca(2+) serves as cofactor. In terms of tissue distribution, expressed by the venom gland.

It localises to the secreted. It carries out the reaction a 1,2-diacyl-sn-glycero-3-phosphocholine + H2O = a 1-acyl-sn-glycero-3-phosphocholine + a fatty acid + H(+). Functionally, PLA2 catalyzes the calcium-dependent hydrolysis of the 2-acyl groups in 3-sn-phosphoglycerides. In Bungarus candidus (Malayan krait), this protein is Acidic phospholipase A2 1.